The following is a 212-amino-acid chain: Large ribosomal subunit protein uL3 (212 aa).

At Q153 the chain carries N5-methylglutamine.

This sequence belongs to the universal ribosomal protein uL3 family. In terms of assembly, part of the 50S ribosomal subunit. Forms a cluster with proteins L14 and L19. Post-translationally, methylated by PrmB.

Its function is as follows. One of the primary rRNA binding proteins, it binds directly near the 3'-end of the 23S rRNA, where it nucleates assembly of the 50S subunit. The protein is Large ribosomal subunit protein uL3 of Shewanella pealeana (strain ATCC 700345 / ANG-SQ1).